Here is a 319-residue protein sequence, read N- to C-terminus: Beta-ketoacyl-[acyl-carrier-protein] synthase III (319 aa).

Residues Cys-113 and His-246 contribute to the active site. Residues 247–251 (QANLR) are ACP-binding. Asn-276 is a catalytic residue.

Belongs to the thiolase-like superfamily. FabH family. As to quaternary structure, homodimer.

Its subcellular location is the cytoplasm. It catalyses the reaction malonyl-[ACP] + acetyl-CoA + H(+) = 3-oxobutanoyl-[ACP] + CO2 + CoA. It functions in the pathway lipid metabolism; fatty acid biosynthesis. Its function is as follows. Catalyzes the condensation reaction of fatty acid synthesis by the addition to an acyl acceptor of two carbons from malonyl-ACP. Catalyzes the first condensation reaction which initiates fatty acid synthesis and may therefore play a role in governing the total rate of fatty acid production. Possesses both acetoacetyl-ACP synthase and acetyl transacylase activities. Its substrate specificity determines the biosynthesis of branched-chain and/or straight-chain of fatty acids. This Laribacter hongkongensis (strain HLHK9) protein is Beta-ketoacyl-[acyl-carrier-protein] synthase III.